The primary structure comprises 381 residues: Putative acetyl-CoA C-acetyltransferase VraB (381 aa).

Residue Cys86 is the Acyl-thioester intermediate of the active site. The active-site Proton acceptor is His338.

It belongs to the thiolase-like superfamily. Thiolase family.

The chain is Putative acetyl-CoA C-acetyltransferase VraB (vraB) from Staphylococcus haemolyticus (strain JCSC1435).